Here is a 520-residue protein sequence, read N- to C-terminus: GMP synthase [glutamine-hydrolyzing] (520 aa).

The region spanning 9–202 is the Glutamine amidotransferase type-1 domain; the sequence is KILILDFGSQ…VRAICGCTGH (194 aa). The Nucleophile role is filled by Cys86. Residues His176 and Glu178 contribute to the active site. The region spanning 203–395 is the GMPS ATP-PPase domain; sequence WTPGQIIEDA…LGLPHQMVWR (193 aa). 230 to 236 contributes to the ATP binding site; the sequence is SGGVDSS.

Homodimer.

It catalyses the reaction XMP + L-glutamine + ATP + H2O = GMP + L-glutamate + AMP + diphosphate + 2 H(+). It functions in the pathway purine metabolism; GMP biosynthesis; GMP from XMP (L-Gln route): step 1/1. Functionally, catalyzes the synthesis of GMP from XMP. The protein is GMP synthase [glutamine-hydrolyzing] of Pelobacter propionicus (strain DSM 2379 / NBRC 103807 / OttBd1).